A 158-amino-acid chain; its full sequence is MDFRQISPTTCTTPASSSSAAPPTPASSSSAAPPTPASSSSAAPPTPANCSTAAPPTPANCSTAAPPTPASSGSAAPPTPAPDHWWMEAPHHWLPGLLARCGSRQLPSSVGLACFGTAAVPRKPVNWACQGSHGELEASQVGSGKAGPCTPHPSLLGF.

2 disordered regions span residues Met1 to Trp86 and Ala138 to Phe158. Over residues Ser7–Ala76 the composition is skewed to low complexity.

This is an uncharacterized protein from Homo sapiens (Human).